Here is a 935-residue protein sequence, read N- to C-terminus: ABC transporter A family member 7 (935 aa).

7 helical membrane passes run 34-54, 338-358, 392-412, 424-444, 454-474, 483-503, and 528-548; these read LIMI…LFDT, IASL…FPVI, FLTI…AIGL, FVFY…VSSV, ASYI…NFLI, WIIV…YELA, and DDVF…AYYI. The disordered stretch occupies residues 571-591; it reads SLRRPSLQRQGSKVSVDMEKP. One can recognise an ABC transporter domain in the interval 613–850; that stretch reads IVCDNLKKVY…YGGSYVFTMT (238 aa). Residue 651 to 658 coordinates ATP; sequence GPNGAGKT.

This sequence belongs to the ABC transporter superfamily. ABCA family. CPR flippase (TC 3.A.1.211) subfamily.

The protein localises to the membrane. The protein is ABC transporter A family member 7 (ABCA7) of Arabidopsis thaliana (Mouse-ear cress).